The sequence spans 575 residues: Probable methionine--tRNA ligase, mitochondrial (575 aa).

The 'HIGH' region signature appears at 52–62 (FYVNGPPHIGH). Positions 352–356 (KMSKS) match the 'KMSKS' region motif. Lys355 is an ATP binding site.

It belongs to the class-I aminoacyl-tRNA synthetase family.

Its subcellular location is the mitochondrion matrix. The catalysed reaction is tRNA(Met) + L-methionine + ATP = L-methionyl-tRNA(Met) + AMP + diphosphate. In Dictyostelium discoideum (Social amoeba), this protein is Probable methionine--tRNA ligase, mitochondrial (mmetS).